A 131-amino-acid polypeptide reads, in one-letter code: Photosystem II reaction center Psb28 protein (131 aa).

Residues 110–131 (NGLGYSQNQKSDQTDAATEEQA) form a disordered region. The span at 112–125 (LGYSQNQKSDQTDA) shows a compositional bias: polar residues.

It belongs to the Psb28 family. In terms of assembly, part of the photosystem II complex.

The protein resides in the cellular thylakoid membrane. The protein is Photosystem II reaction center Psb28 protein of Synechococcus sp. (strain CC9902).